Here is a 230-residue protein sequence, read N- to C-terminus: Sugar fermentation stimulation protein homolog (230 aa).

This sequence belongs to the SfsA family.

This is Sugar fermentation stimulation protein homolog from Clostridium perfringens (strain ATCC 13124 / DSM 756 / JCM 1290 / NCIMB 6125 / NCTC 8237 / Type A).